Here is a 1219-residue protein sequence, read N- to C-terminus: ATP-dependent helicase/nuclease subunit A (1219 aa).

The UvrD-like helicase ATP-binding domain occupies 12-477 (TRWTDNQWKS…IDLSQNFRSR (466 aa)). 33–40 (AAAGSGKT) contributes to the ATP binding site. The 309-residue stretch at 478 to 786 (EEVLTTTNYL…RMMTIHSSKG (309 aa)) folds into the UvrD-like helicase C-terminal domain. The disordered stretch occupies residues 997–1016 (PSKQSVSELKRQHETEQSDT). Over residues 1004–1016 (ELKRQHETEQSDT) the composition is skewed to basic and acidic residues.

This sequence belongs to the helicase family. AddA subfamily. As to quaternary structure, heterodimer of AddA and AddB/RexB. Mg(2+) serves as cofactor.

The catalysed reaction is Couples ATP hydrolysis with the unwinding of duplex DNA by translocating in the 3'-5' direction.. The enzyme catalyses ATP + H2O = ADP + phosphate + H(+). The heterodimer acts as both an ATP-dependent DNA helicase and an ATP-dependent, dual-direction single-stranded exonuclease. Recognizes the chi site generating a DNA molecule suitable for the initiation of homologous recombination. The AddA nuclease domain is required for chi fragment generation; this subunit has the helicase and 3' -&gt; 5' nuclease activities. The sequence is that of ATP-dependent helicase/nuclease subunit A from Staphylococcus saprophyticus subsp. saprophyticus (strain ATCC 15305 / DSM 20229 / NCIMB 8711 / NCTC 7292 / S-41).